The sequence spans 389 residues: Chalcone synthase (389 aa).

Catalysis depends on residues Cys164, His303, and Asn336.

The protein belongs to the thiolase-like superfamily. Chalcone/stilbene synthases family. As to quaternary structure, homodimer. In terms of tissue distribution, mainly expressed in flowers, to a lower extent in young leaves, and barely in mature leaves and twigs.

It catalyses the reaction (E)-4-coumaroyl-CoA + 3 malonyl-CoA + 3 H(+) = 2',4,4',6'-tetrahydroxychalcone + 3 CO2 + 4 CoA. It participates in secondary metabolite biosynthesis; flavonoid biosynthesis. Its function is as follows. The primary product of this enzyme is 4,2',4',6'-tetrahydroxychalcone (also termed naringenin-chalcone or chalcone) which can under specific conditions spontaneously isomerize into naringenin. The chain is Chalcone synthase from Rhododendron dauricum (Azalea daurica).